A 1035-amino-acid chain; its full sequence is Sialidase A (1035 aa).

Residues 1 to 53 form the signal peptide; that stretch reads MSYFRNRDIDIERNSMNRSVQERKCRYSIRKLSVGAVSMIVGAVVFGTSPVLA. The interval 57 to 112 is disordered; it reads ASEQPLANETQLSGESSTLTDTEKSQPSSETELSGNKQEQERKDKQEEKIPRDYYA. Positions 61–92 are enriched in polar residues; the sequence is PLANETQLSGESSTLTDTEKSQPSSETELSGN. The span at 94–112 shows a compositional bias: basic and acidic residues; that stretch reads QEQERKDKQEEKIPRDYYA. Arginine 347 contributes to the substrate binding site. Aspartate 372 serves as the catalytic Proton acceptor. BNR repeat units lie at residues 381 to 392, 539 to 550, and 607 to 618; these read RRSEDNGKTWGD, SYSDDDGKTWSA, and IYSDDHGKTWHA. Glutamate 647 is a catalytic residue. Arginine 663 lines the substrate pocket. The BNR 4 repeat unit spans residues 672–683; that stretch reads ATSKDGGVTWEK. Residues 902-951 are disordered; the sequence is GPLGTSGEEPAPTVEKPEYTGPLGTSGEEPAPTVEKPEYTGPLGTAGEEA. The short motif at 1003–1007 is the LPXTG sorting signal element; the sequence is LPETG. Residue threonine 1006 is modified to Pentaglycyl murein peptidoglycan amidated threonine. Residues 1007–1035 constitute a propeptide, removed by sortase; it reads GNKESDLLASLGLTAFFLGLFTLGKKREQ.

It belongs to the glycosyl hydrolase 33 family.

The protein resides in the secreted. It localises to the cell wall. The enzyme catalyses Hydrolysis of alpha-(2-&gt;3)-, alpha-(2-&gt;6)-, alpha-(2-&gt;8)- glycosidic linkages of terminal sialic acid residues in oligosaccharides, glycoproteins, glycolipids, colominic acid and synthetic substrates.. The polypeptide is Sialidase A (nanA) (Streptococcus pneumoniae).